A 298-amino-acid polypeptide reads, in one-letter code: Protoheme IX farnesyltransferase (298 aa).

9 consecutive transmembrane segments (helical) span residues 19 to 39, 40 to 60, 91 to 111, 112 to 132, 140 to 160, 167 to 187, 213 to 233, 236 to 256, and 277 to 297; these read VMSL…QPVN, PFVA…SGAL, LAVG…GGNW, FAAG…TIWL, IVIG…LPTG, LLMF…LALF, IFAY…TSVG, LYLA…WQIL, and LSLY…WVGG.

Belongs to the UbiA prenyltransferase family. Protoheme IX farnesyltransferase subfamily. As to quaternary structure, interacts with CtaA.

It localises to the cell inner membrane. The catalysed reaction is heme b + (2E,6E)-farnesyl diphosphate + H2O = Fe(II)-heme o + diphosphate. It participates in porphyrin-containing compound metabolism; heme O biosynthesis; heme O from protoheme: step 1/1. In terms of biological role, converts heme B (protoheme IX) to heme O by substitution of the vinyl group on carbon 2 of heme B porphyrin ring with a hydroxyethyl farnesyl side group. This is Protoheme IX farnesyltransferase from Paracoccus denitrificans.